The sequence spans 321 residues: Ribose-phosphate pyrophosphokinase (321 aa).

ATP contacts are provided by residues 39–41 (DGE) and 98–99 (RQ). Residues His-132 and Asp-170 each contribute to the Mg(2+) site. Lys-195 is a catalytic residue. D-ribose 5-phosphate-binding positions include Arg-197, Asp-221, and 225 to 229 (DTGGT).

It belongs to the ribose-phosphate pyrophosphokinase family. Class I subfamily. Homohexamer. It depends on Mg(2+) as a cofactor.

The protein resides in the cytoplasm. The catalysed reaction is D-ribose 5-phosphate + ATP = 5-phospho-alpha-D-ribose 1-diphosphate + AMP + H(+). It participates in metabolic intermediate biosynthesis; 5-phospho-alpha-D-ribose 1-diphosphate biosynthesis; 5-phospho-alpha-D-ribose 1-diphosphate from D-ribose 5-phosphate (route I): step 1/1. In terms of biological role, involved in the biosynthesis of the central metabolite phospho-alpha-D-ribosyl-1-pyrophosphate (PRPP) via the transfer of pyrophosphoryl group from ATP to 1-hydroxyl of ribose-5-phosphate (Rib-5-P). This is Ribose-phosphate pyrophosphokinase from Mycoplasmopsis pulmonis (strain UAB CTIP) (Mycoplasma pulmonis).